Consider the following 471-residue polypeptide: Ribulose bisphosphate carboxylase large chain 2 (471 aa).

N116 and T166 together coordinate substrate. Catalysis depends on K168, which acts as the Proton acceptor. K170 is a substrate binding site. Mg(2+) contacts are provided by K194, D196, and E197. K194 carries the N6-carboxylysine modification. H287 functions as the Proton acceptor in the catalytic mechanism. Positions 288, 320, and 372 each coordinate substrate.

It belongs to the RuBisCO large chain family. Type I subfamily. Heterohexadecamer of 8 large chains and 8 small chains; disulfide-linked. The disulfide link is formed within the large subunit homodimers. Mg(2+) serves as cofactor. In terms of processing, the disulfide bond which can form in the large chain dimeric partners within the hexadecamer appears to be associated with oxidative stress and protein turnover.

It carries out the reaction 2 (2R)-3-phosphoglycerate + 2 H(+) = D-ribulose 1,5-bisphosphate + CO2 + H2O. It catalyses the reaction D-ribulose 1,5-bisphosphate + O2 = 2-phosphoglycolate + (2R)-3-phosphoglycerate + 2 H(+). Its function is as follows. RuBisCO catalyzes two reactions: the carboxylation of D-ribulose 1,5-bisphosphate, the primary event in carbon dioxide fixation, as well as the oxidative fragmentation of the pentose substrate. Both reactions occur simultaneously and in competition at the same active site. The chain is Ribulose bisphosphate carboxylase large chain 2 from Allochromatium vinosum (strain ATCC 17899 / DSM 180 / NBRC 103801 / NCIMB 10441 / D) (Chromatium vinosum).